The chain runs to 425 residues: UDP-N-acetylglucosamine 1-carboxyvinyltransferase (425 aa).

23 to 24 (KN) is a phosphoenolpyruvate binding site. Arginine 100 is a binding site for UDP-N-acetyl-alpha-D-glucosamine. Cysteine 124 functions as the Proton donor in the catalytic mechanism. Cysteine 124 is subject to 2-(S-cysteinyl)pyruvic acid O-phosphothioketal. Residues 169-172 (KVSV), aspartate 313, and valine 335 contribute to the UDP-N-acetyl-alpha-D-glucosamine site.

Belongs to the EPSP synthase family. MurA subfamily.

The protein resides in the cytoplasm. It carries out the reaction phosphoenolpyruvate + UDP-N-acetyl-alpha-D-glucosamine = UDP-N-acetyl-3-O-(1-carboxyvinyl)-alpha-D-glucosamine + phosphate. It participates in cell wall biogenesis; peptidoglycan biosynthesis. Its function is as follows. Cell wall formation. Adds enolpyruvyl to UDP-N-acetylglucosamine. This is UDP-N-acetylglucosamine 1-carboxyvinyltransferase from Wolbachia pipientis subsp. Culex pipiens (strain wPip).